Reading from the N-terminus, the 339-residue chain is MKDSLVLQSRVPAHPDSRCWFLAWNPSGTLLASCGGDRKIRIWGTEGDSWICKSVLSEGHQRTVRKVAWSPCGNYLASASFDATTCIWKKNQDDFECVTTLEGHENEVKSVAWAPSGNLLATCSRDKSVWVWEVDEEDEYECVSVLSSHTQDVKHVVWHPSQELLASASYDDTVKLYQEEGDDWVCCATLEGHESTVWSIAFDPSGQRLASCSDDRTVRIWRQYLPGNEQGVACSGSDPSWKCICTLSGFHTRTIYDVAWCQLTGALATACGDDAIRVFEEDPGSDPQQPTFSLTAHLRQAHSQDVNCVAWNPKEPGLLASCSDDGEVAFWEYHQPAGL.

7 WD repeats span residues 14 to 53, 59 to 98, 103 to 142, 148 to 187, 192 to 231, 250 to 289, and 301 to 339; these read HPDSRCWFLAWNPSGTLLASCGGDRKIRIWGTEGDSWICK, GHQRTVRKVAWSPCGNYLASASFDATTCIWKKNQDDFECV, GHENEVKSVAWAPSGNLLATCSRDKSVWVWEVDEEDEYEC, SHTQDVKHVVWHPSQELLASASYDDTVKLYQEEGDDWVCC, GHESTVWSIAFDPSGQRLASCSDDRTVRIWRQYLPGNEQG, FHTRTIYDVAWCQLTGALATACGDDAIRVFEEDPGSDPQQ, and AHSQDVNCVAWNPKEPGLLASCSDDGEVAFWEYHQPAGL. Residues 176-178 carry the LYR motif; required for interaction with HSC20 motif; that stretch reads LYQ.

It belongs to the WD repeat CIA1 family. As to quaternary structure, component of the CIA complex. Interacts with CIAO2A and forms a complex with CIAO2B and MMS19; the interactions with CIAO2A and CIAO2B are mutually exclusive. Interacts with CHD1L, ERCC2, IREB2 and POLD1. Component of the MMXD complex, which includes CIAO1, ERCC2, CIAO2B, MMS19 and SLC25A5. Interacts with WT1. Interacts with CIAO3. Interacts (via LYR motif) with HSC20.

Its subcellular location is the cytoplasm. Key component of the cytosolic iron-sulfur protein assembly (CIA) complex, a multiprotein complex that mediates the incorporation of iron-sulfur cluster into extramitochondrial Fe/S proteins. As a CIA complex component, interacts specifically with CIAO2A or CIAO2B and MMS19 to assist different branches of iron-sulfur protein assembly, depending of its interactors. The complex CIAO1:CIAO2B:MMS19 binds to and facilitates the assembly of most cytosolic-nuclear Fe/S proteins. CIAO1:CIAO2A specifically matures ACO1 and stabilizes IREB2. Seems to specifically modulate the transactivation activity of WT1. As part of the mitotic spindle-associated MMXD complex it may play a role in chromosome segregation. The protein is Probable cytosolic iron-sulfur protein assembly protein CIAO1 of Mus musculus (Mouse).